Consider the following 787-residue polypeptide: Penicillin-binding protein 1A (787 aa).

The Cytoplasmic segment spans residues 1 to 6 (MYKSLF). The helical; Signal-anchor for type II membrane protein transmembrane segment at 7–27 (LCLKIFAVLILIGCSVTAYII) threads the bilayer. Residues 28–787 (YHYSHDLPDY…GMLDQSQEIY (760 aa)) lie on the Periplasmic side of the membrane. The tract at residues 49–220 (TRIYSRDGKL…SELNPDKNYS (172 aa)) is transglycosylase. Glu87 serves as the catalytic Proton donor; for transglycosylase activity. The segment at 398–711 (DVIVVEPIKD…SNVVLPIFID (314 aa)) is transpeptidase. Ser457 acts as the Acyl-ester intermediate; for transpeptidase activity in catalysis.

In the N-terminal section; belongs to the glycosyltransferase 51 family. The protein in the C-terminal section; belongs to the transpeptidase family.

It localises to the cell inner membrane. The enzyme catalyses [GlcNAc-(1-&gt;4)-Mur2Ac(oyl-L-Ala-gamma-D-Glu-L-Lys-D-Ala-D-Ala)](n)-di-trans,octa-cis-undecaprenyl diphosphate + beta-D-GlcNAc-(1-&gt;4)-Mur2Ac(oyl-L-Ala-gamma-D-Glu-L-Lys-D-Ala-D-Ala)-di-trans,octa-cis-undecaprenyl diphosphate = [GlcNAc-(1-&gt;4)-Mur2Ac(oyl-L-Ala-gamma-D-Glu-L-Lys-D-Ala-D-Ala)](n+1)-di-trans,octa-cis-undecaprenyl diphosphate + di-trans,octa-cis-undecaprenyl diphosphate + H(+). The catalysed reaction is Preferential cleavage: (Ac)2-L-Lys-D-Ala-|-D-Ala. Also transpeptidation of peptidyl-alanyl moieties that are N-acyl substituents of D-alanine.. Its pathway is cell wall biogenesis; peptidoglycan biosynthesis. Its function is as follows. Cell wall formation. Synthesis of cross-linked peptidoglycan from the lipid intermediates. The enzyme has a penicillin-insensitive transglycosylase N-terminal domain (formation of linear glycan strands) and a penicillin-sensitive transpeptidase C-terminal domain (cross-linking of the peptide subunits). This is Penicillin-binding protein 1A (mrcA) from Rickettsia prowazekii (strain Madrid E).